Here is a 562-residue protein sequence, read N- to C-terminus: Potassium-transporting ATPase potassium-binding subunit (562 aa).

12 helical membrane passes run 5-25, 63-83, 132-152, 175-195, 250-270, 279-299, 327-347, 356-376, 379-399, 416-436, 483-503, and 526-546; these read AFLL…PLGS, AAAI…LLMA, GLTV…FALI, LYVL…QGVL, LSNI…CFAF, QGHA…AVVM, FGVL…TGAV, ALGG…FGGV, GLYG…LMIG, MTAL…ALAL, VLLA…VLAI, and LFIG…FIPA.

It belongs to the KdpA family. The system is composed of three essential subunits: KdpA, KdpB and KdpC.

The protein localises to the cell inner membrane. Part of the high-affinity ATP-driven potassium transport (or Kdp) system, which catalyzes the hydrolysis of ATP coupled with the electrogenic transport of potassium into the cytoplasm. This subunit binds the periplasmic potassium ions and delivers the ions to the membrane domain of KdpB through an intramembrane tunnel. The chain is Potassium-transporting ATPase potassium-binding subunit from Pectobacterium carotovorum subsp. carotovorum (strain PC1).